Consider the following 519-residue polypeptide: 2,3-bisphosphoglycerate-independent phosphoglycerate mutase (519 aa).

Residues D9 and S60 each coordinate Mn(2+). The active-site Phosphoserine intermediate is the S60. A compositionally biased stretch (basic and acidic residues) spans 76–91; the sequence is DSARVSDSIARSRGEA. Residues 76 to 102 are disordered; it reads DSARVSDSIARSRGEAPPDDDAQDPPF. Substrate-binding positions include H134, 163–164, R195, R201, 267–270, and K341; these read RD and RSDR. 5 residues coordinate Mn(2+): D408, H412, D449, H450, and H466.

The protein belongs to the BPG-independent phosphoglycerate mutase family. The cofactor is Mn(2+).

The enzyme catalyses (2R)-2-phosphoglycerate = (2R)-3-phosphoglycerate. It participates in carbohydrate degradation; glycolysis; pyruvate from D-glyceraldehyde 3-phosphate: step 3/5. Its function is as follows. Catalyzes the interconversion of 2-phosphoglycerate and 3-phosphoglycerate. This chain is 2,3-bisphosphoglycerate-independent phosphoglycerate mutase, found in Haloarcula marismortui (strain ATCC 43049 / DSM 3752 / JCM 8966 / VKM B-1809) (Halobacterium marismortui).